The sequence spans 87 residues: Small ribosomal subunit protein bS20 (87 aa).

The tract at residues 1–26 (MANIKSAKKRAVQSEKARKHNASRRS) is disordered.

It belongs to the bacterial ribosomal protein bS20 family.

In terms of biological role, binds directly to 16S ribosomal RNA. This is Small ribosomal subunit protein bS20 from Enterobacter sp. (strain 638).